We begin with the raw amino-acid sequence, 255 residues long: ATP synthase subunit a (255 aa).

Helical transmembrane passes span 40-60 (TEPI…ASEV), 109-129 (LIGG…IPGV), 135-155 (NLNI…YYGL), 163-183 (VAHL…IEVI), 196-218 (LMLN…ALFV), and 230-250 (IVVQ…LATE).

This sequence belongs to the ATPase A chain family. In terms of assembly, F-type ATPases have 2 components, CF(1) - the catalytic core - and CF(0) - the membrane proton channel. CF(1) has five subunits: alpha(3), beta(3), gamma(1), delta(1), epsilon(1). CF(0) has three main subunits: a(1), b(2) and c(9-12). The alpha and beta chains form an alternating ring which encloses part of the gamma chain. CF(1) is attached to CF(0) by a central stalk formed by the gamma and epsilon chains, while a peripheral stalk is formed by the delta and b chains.

It localises to the cell inner membrane. Its function is as follows. Key component of the proton channel; it plays a direct role in the translocation of protons across the membrane. This is ATP synthase subunit a from Sorangium cellulosum (strain So ce56) (Polyangium cellulosum (strain So ce56)).